The primary structure comprises 682 residues: MSRKQLALFEPTLVVQALKEAVKKLNPQAQWRNPVMFIVWIGSLLTTCISIAMASGAMPGNALFSAAISGWLWVTVLFANFAEALAEGRSKAQANSLKGVKKTAFARKLREPKYGAAADKVPADQLRKGDIVLVEAGDIIPCDGEVIEGGASVDESAITGESAPVIRESGGDFASVTGGTRILSDWLVIECSVNPGETFLDRMIAMVEGAQRRKTPNEIALTILLIALTIVFLLATATLWPFSAWGGNAVSVTVLVALLVCLIPTTIGGLLSAIGVAGMSRMLGANVIATSGRAVEAAGDVDVLLLDKTGTITLGNRQASEFIPAQGVDEKTLADAAQLASLADETPEGRSIVILAKQRFNLRERDVQSLHATFVPFTAQSRMSGINIDNRMIRKGSVDAIRRHIEANGGHFPTDVDQKVDQVARQGATPLVVVEGSRVLGVIALKDIVKGGIKERFAQLRQMGIKTVMITGDNRLTAAAIAAEAGVDDFLAEATPEAKLALIRQYQAEGRLVAMTGDGTNDAPALAQADVAVAMNSGTQAAKEAGNMVDLDSNPTKLIEVVHIGKQMLMTRGSLTTFSIANDVAKYFAIIPAAFAATYPQLNALNIMRLHSPDSAILSAVIFNALIIVFLIPLALKGVSYKPLTASAMLRRNLWIYGLGGLLVPFIGIKVIDLLLTVCGLV.

The next 4 membrane-spanning stretches (helical) occupy residues 34–54, 62–82, 219–239, and 254–274; these read PVMFIVWIGSLLTTCISIAMA, ALFSAAISGWLWVTVLFANFA, IALTILLIALTIVFLLATATL, and VLVALLVCLIPTTIGGLLSAI. Catalysis depends on D307, which acts as the 4-aspartylphosphate intermediate. ATP contacts are provided by residues D344, E348, 377–384, and K395; that span reads FTAQSRMS. 2 residues coordinate Mg(2+): D518 and D522. 3 consecutive transmembrane segments (helical) span residues 588–608, 616–636, and 656–676; these read FAIIPAAFAATYPQLNALNIM, AILSAVIFNALIIVFLIPLAL, and IYGLGGLLVPFIGIKVIDLLL.

Belongs to the cation transport ATPase (P-type) (TC 3.A.3) family. Type IA subfamily. In terms of assembly, the system is composed of three essential subunits: KdpA, KdpB and KdpC.

It localises to the cell inner membrane. The catalysed reaction is K(+)(out) + ATP + H2O = K(+)(in) + ADP + phosphate + H(+). Functionally, part of the high-affinity ATP-driven potassium transport (or Kdp) system, which catalyzes the hydrolysis of ATP coupled with the electrogenic transport of potassium into the cytoplasm. This subunit is responsible for energy coupling to the transport system and for the release of the potassium ions to the cytoplasm. In Escherichia coli O8 (strain IAI1), this protein is Potassium-transporting ATPase ATP-binding subunit.